Reading from the N-terminus, the 288-residue chain is Elongation factor Ts (288 aa).

Residues 79 to 82 (TDFV) are involved in Mg(2+) ion dislocation from EF-Tu.

The protein belongs to the EF-Ts family.

Its subcellular location is the cytoplasm. Associates with the EF-Tu.GDP complex and induces the exchange of GDP to GTP. It remains bound to the aminoacyl-tRNA.EF-Tu.GTP complex up to the GTP hydrolysis stage on the ribosome. This chain is Elongation factor Ts, found in Ehrlichia chaffeensis (strain ATCC CRL-10679 / Arkansas).